A 102-amino-acid chain; its full sequence is NADH-quinone oxidoreductase subunit K (102 aa).

The next 3 membrane-spanning stretches (helical) occupy residues 5-25 (IAHYLTVSAVLFTLGIFGIFL), 31-51 (IIILMSIELILLAVNLNFIAF), and 66-86 (FVLTVAAAEAAIGLAILVVFF).

Belongs to the complex I subunit 4L family. In terms of assembly, NDH-1 is composed of 14 different subunits. Subunits NuoA, H, J, K, L, M, N constitute the membrane sector of the complex.

Its subcellular location is the cell inner membrane. It catalyses the reaction a quinone + NADH + 5 H(+)(in) = a quinol + NAD(+) + 4 H(+)(out). Functionally, NDH-1 shuttles electrons from NADH, via FMN and iron-sulfur (Fe-S) centers, to quinones in the respiratory chain. The immediate electron acceptor for the enzyme in this species is believed to be ubiquinone. Couples the redox reaction to proton translocation (for every two electrons transferred, four hydrogen ions are translocated across the cytoplasmic membrane), and thus conserves the redox energy in a proton gradient. This chain is NADH-quinone oxidoreductase subunit K, found in Chelativorans sp. (strain BNC1).